A 666-amino-acid polypeptide reads, in one-letter code: DNA ligase (666 aa).

Residues Asp34 to Asp38, Ser83 to Leu84, and Glu114 contribute to the NAD(+) site. Lys116 (N6-AMP-lysine intermediate) is an active-site residue. 4 residues coordinate NAD(+): Arg137, Glu171, Lys286, and Lys310. Residues Cys404, Cys407, Cys422, and Cys427 each contribute to the Zn(2+) site. Residues Asn588–Glu666 form the BRCT domain.

The protein belongs to the NAD-dependent DNA ligase family. LigA subfamily. It depends on Mg(2+) as a cofactor. Mn(2+) is required as a cofactor.

It carries out the reaction NAD(+) + (deoxyribonucleotide)n-3'-hydroxyl + 5'-phospho-(deoxyribonucleotide)m = (deoxyribonucleotide)n+m + AMP + beta-nicotinamide D-nucleotide.. DNA ligase that catalyzes the formation of phosphodiester linkages between 5'-phosphoryl and 3'-hydroxyl groups in double-stranded DNA using NAD as a coenzyme and as the energy source for the reaction. It is essential for DNA replication and repair of damaged DNA. The polypeptide is DNA ligase (Mesoplasma florum (strain ATCC 33453 / NBRC 100688 / NCTC 11704 / L1) (Acholeplasma florum)).